Consider the following 590-residue polypeptide: Guanylate-binding protein 5 (590 aa).

Residues 1 to 306 are NLRP3-binding; sequence MAPEIHMPEP…LTYVDAINSG (306 aa). Residues 1–310 form a GTPase domain (Globular) region; that stretch reads MAPEIHMPEP…DAINSGALPS (310 aa). Positions 35–277 constitute a GB1/RHD3-type G domain; the sequence is TQPVVVVAIV…FCSHIFTQSK (243 aa). GTP-binding positions include 45–52, 67–69, 182–183, and Leu-246; these read GLYRTGKS, VGS, and RD. A required for tetramerization, but not for dimerization region spans residues 529–590; that stretch reads QIALEKARVA…RRHHHDCVIS (62 aa). Cys-587 bears the Cysteine methyl ester mark. Cys-587 carries S-geranylgeranyl cysteine lipidation. The propeptide at 588–590 is removed in mature form; sequence VIS.

It belongs to the TRAFAC class dynamin-like GTPase superfamily. GB1/RHD3 GTPase family. GB1 subfamily. As to quaternary structure, homodimer; homodimerizes upon GTP-binding, forming a close face-to-face dimer. Heterodimer with other family members, including GBP1, GBP2, GBP3 and GBP4. May also form tetramers (dimer of dimers) in the presence of GTP. Interacts with NLRP3, possibly in its tetrameric form, and promotes PYCARD/ASC polymerization. Post-translationally, isoprenylation is required for proper subcellular location. As to expression, low expression, if any, in many tissues in the absence of stimulation.

It is found in the cytoplasmic vesicle membrane. The protein resides in the golgi apparatus membrane. The protein localises to the cytoplasm. It carries out the reaction GTP + H2O = GDP + phosphate + H(+). Its function is as follows. Interferon (IFN)-inducible GTPase that plays important roles in innate immunity against a diverse range of bacterial, viral and protozoan pathogens. Hydrolyzes GTP, but in contrast to other family members, does not produce GMP. Following infection, recruited to the pathogen-containing vacuoles or vacuole-escaped bacteria and acts as a positive regulator of inflammasome assembly by promoting the release of inflammasome ligands from bacteria. Acts by promoting lysis of pathogen-containing vacuoles, releasing pathogens into the cytosol. Following pathogen release in the cytosol, promotes recruitment of proteins that mediate bacterial cytolysis, such as Gm12250/Irgb10: this liberates ligands that are detected by inflammasomes, such as lipopolysaccharide (LPS) that activates the non-canonical CASP4/CASP11 inflammasome or double-stranded DNA (dsDNA) that activates the AIM2 inflammasome. As an activator of NLRP3 inflammasome assembly: promotes selective NLRP3 inflammasome assembly in response to microbial and soluble, but not crystalline, agents. Independently of its GTPase activity, acts as an inhibitor of various viruses infectivity by inhibiting FURIN-mediated maturation of viral envelope proteins. This chain is Guanylate-binding protein 5, found in Mus musculus (Mouse).